The primary structure comprises 1775 residues: Stereocilin (1775 aa).

The first 22 residues, 1-22 (MALSLWPLLLLLLLLLLLSFAV), serve as a signal peptide directing secretion. Asparagine 65, asparagine 202, asparagine 297, asparagine 366, asparagine 427, asparagine 476, asparagine 540, asparagine 565, asparagine 656, asparagine 824, asparagine 916, asparagine 964, asparagine 1179, and asparagine 1274 each carry an N-linked (GlcNAc...) asparagine glycan.

The protein belongs to the stereocilin family.

It is found in the cell surface. Its subcellular location is the cell projection. The protein localises to the kinocilium. It localises to the stereocilium. Functionally, essential to the formation of horizontal top connectors between outer hair cell stereocilia. The sequence is that of Stereocilin (STRC) from Homo sapiens (Human).